A 433-amino-acid chain; its full sequence is Enolase (433 aa).

Q167 serves as a coordination point for (2R)-2-phosphoglycerate. The active-site Proton donor is the E209. D246, E291, and D318 together coordinate Mg(2+). (2R)-2-phosphoglycerate is bound by residues K343, R372, S373, and K394. K343 serves as the catalytic Proton acceptor.

Belongs to the enolase family. As to quaternary structure, component of the RNA degradosome, a multiprotein complex involved in RNA processing and mRNA degradation. It depends on Mg(2+) as a cofactor.

It is found in the cytoplasm. The protein localises to the secreted. Its subcellular location is the cell surface. The catalysed reaction is (2R)-2-phosphoglycerate = phosphoenolpyruvate + H2O. It functions in the pathway carbohydrate degradation; glycolysis; pyruvate from D-glyceraldehyde 3-phosphate: step 4/5. In terms of biological role, catalyzes the reversible conversion of 2-phosphoglycerate (2-PG) into phosphoenolpyruvate (PEP). It is essential for the degradation of carbohydrates via glycolysis. The protein is Enolase of Pasteurella multocida (strain Pm70).